A 310-amino-acid polypeptide reads, in one-letter code: MLNSWPLAKDLQVLVEIVHSGSFSAAAATLGQTPAFVTKRIQILENTLATTLLNRSARGVALTESGQRCYEHALEILTQYQRLVDDVTQIKTRPEGMIRIGCSFGFGRSHIAPAITELMRNYPELQVHFELFDRQIDLVQDNIDLDIRINDEIPDYYIAHLLTKNKRILCAAPEYLQKYPQPQSLQELSRHDCLVTKERDMTHGIWELGNGQEKKSVKVSGHLSSNSGEIVLQWALEGKGIMLRSEWDVLPFLESGKLVRVLPEYAQSANIWAVYREPLYRSMKLRVCVEFLAAWCQQRLGKPDEGYQVM.

Positions 6–63 (PLAKDLQVLVEIVHSGSFSAAAATLGQTPAFVTKRIQILENTLATTLLNRSARGVALT) constitute an HTH lysR-type domain. The segment at residues 23–42 (FSAAAATLGQTPAFVTKRIQ) is a DNA-binding region (H-T-H motif).

Belongs to the LysR transcriptional regulatory family.

In terms of biological role, positive regulator required for L-tartrate-dependent anaerobic growth on glycerol. Induces expression of the ttdA-ttdB-ygjE operon. This is HTH-type transcriptional activator TtdR (ttdR) from Escherichia coli O6:K15:H31 (strain 536 / UPEC).